We begin with the raw amino-acid sequence, 147 residues long: 3-dehydroquinate dehydratase (147 aa).

Catalysis depends on tyrosine 23, which acts as the Proton acceptor. Substrate-binding residues include asparagine 74, histidine 80, and aspartate 87. Histidine 100 serves as the catalytic Proton donor. Substrate contacts are provided by residues isoleucine 101 to serine 102 and arginine 111.

The protein belongs to the type-II 3-dehydroquinase family. As to quaternary structure, homododecamer.

It carries out the reaction 3-dehydroquinate = 3-dehydroshikimate + H2O. Its pathway is metabolic intermediate biosynthesis; chorismate biosynthesis; chorismate from D-erythrose 4-phosphate and phosphoenolpyruvate: step 3/7. Functionally, catalyzes a trans-dehydration via an enolate intermediate. The polypeptide is 3-dehydroquinate dehydratase (Prochlorococcus marinus (strain MIT 9215)).